Here is an 84-residue protein sequence, read N- to C-terminus: Beta/gamma-crystallin (84 aa).

Beta/gamma crystallin 'Greek key' domains are found at residues 2 to 42 (GKII…IVES) and 43 to 84 (GTWF…VKQQ). The segment at 64 to 84 (KYPNPGSWGGNDDELSSVKQQ) is disordered.

It belongs to the beta/gamma-crystallin family. As to quaternary structure, monomer. Palps of larvae and otolith of the light-sensing ocellus.

Structural component of the neuroectodermal visual system. This chain is Beta/gamma-crystallin, found in Ciona intestinalis (Transparent sea squirt).